A 64-amino-acid chain; its full sequence is DNA-directed RNA polymerase subunit omega (64 aa).

Belongs to the RNA polymerase subunit omega family. The RNAP catalytic core consists of 2 alpha, 1 beta, 1 beta' and 1 omega subunit. When a sigma factor is associated with the core the holoenzyme is formed, which can initiate transcription.

The catalysed reaction is RNA(n) + a ribonucleoside 5'-triphosphate = RNA(n+1) + diphosphate. Functionally, promotes RNA polymerase assembly. Latches the N- and C-terminal regions of the beta' subunit thereby facilitating its interaction with the beta and alpha subunits. The protein is DNA-directed RNA polymerase subunit omega of Oceanobacillus iheyensis (strain DSM 14371 / CIP 107618 / JCM 11309 / KCTC 3954 / HTE831).